The primary structure comprises 214 residues: 3,4-dihydroxy-2-butanone 4-phosphate synthase (214 aa).

Residues 37-38 (RE), Asp-42, 150-154 (RRGHT), and Glu-174 contribute to the D-ribulose 5-phosphate site. Glu-38 is a Mg(2+) binding site. His-153 contributes to the Mg(2+) binding site.

The protein belongs to the DHBP synthase family. In terms of assembly, homodimer. Mg(2+) serves as cofactor. It depends on Mn(2+) as a cofactor.

The catalysed reaction is D-ribulose 5-phosphate = (2S)-2-hydroxy-3-oxobutyl phosphate + formate + H(+). The protein operates within cofactor biosynthesis; riboflavin biosynthesis; 2-hydroxy-3-oxobutyl phosphate from D-ribulose 5-phosphate: step 1/1. Catalyzes the conversion of D-ribulose 5-phosphate to formate and 3,4-dihydroxy-2-butanone 4-phosphate. The sequence is that of 3,4-dihydroxy-2-butanone 4-phosphate synthase from Nitratidesulfovibrio vulgaris (strain DP4) (Desulfovibrio vulgaris).